A 104-amino-acid polypeptide reads, in one-letter code: Large ribosomal subunit protein bL27 (104 aa).

Residues 1–15 (MNNKYFLTKIDLQFF) constitute a propeptide that is removed on maturation.

Belongs to the bacterial ribosomal protein bL27 family. The N-terminus is cleaved by ribosomal processing cysteine protease Prp.

In Mycoplasma pneumoniae (strain ATCC 29342 / M129 / Subtype 1) (Mycoplasmoides pneumoniae), this protein is Large ribosomal subunit protein bL27.